Reading from the N-terminus, the 237-residue chain is Placenta-expressed transcript 1 protein (237 aa).

Positions 1-27 (MLSLRSLLPHLGLFLCLALHLSPSLSA) are cleaved as a signal peptide. N-linked (GlcNAc...) asparagine glycans are attached at residues N30, N67, N103, and N136. Positions 145 to 162 (KMEQVQPSASTPIPESSE) are enriched in polar residues. The disordered stretch occupies residues 145–170 (KMEQVQPSASTPIPESSETSQTINTT). S218 carries GPI-anchor amidated serine lipidation. Positions 219-237 (PLAGALHILLVFLISKLLF) are cleaved as a propeptide — removed in mature form.

Post-translationally, N-glycosylated. GPI-anchored. As to expression, present in hair follicle cells and sebaceous gland of skin, ciliated epithelial cells of trachea and bronchial tube, striated portion of submandibular gland, distal convoluted tubule cells of kidney, ciliated epithelial cells of oviduct, medulla of adrenal gland and anterior lobe of pituitary gland. Expressed in keratinocytes of the hair follicle at the trichilemmal zone corresponding to the terminally differentiated outermost suprabasal outer root sheath (ORS), including that of the sebaceous gland duct (SGD) and the directly adjacent upper distal end of the companion layer (CL). Expression is similar in all hair follicle growth stages. Also detected during both the early and late anagen phases above the bulge of stem cells. Expressed at the leading edge of the epidermal wound. Not expressed in the interfollicular epidermis (IFE), inner root sheath (IRS) and hair fiber. Highly expressed in placenta. Detected in mammary and prostate epithelia and in the pancreas (at protein level).

The protein resides in the apical cell membrane. Modulates leading keratinocyte migration and cellular adhesion to matrix proteins during a wound-healing response and promotes wound repair. May play a role during trichilemmal differentiation of the hair follicle. This is Placenta-expressed transcript 1 protein (Plet1) from Mus musculus (Mouse).